The sequence spans 392 residues: Flagellar P-ring protein (392 aa).

An N-terminal signal peptide occupies residues 1-38 (MKPFARRALLTAEPIRALLLAASLLAATLGLMPAEAFG).

Belongs to the FlgI family. As to quaternary structure, the basal body constitutes a major portion of the flagellar organelle and consists of four rings (L,P,S, and M) mounted on a central rod.

Its subcellular location is the periplasm. The protein localises to the bacterial flagellum basal body. In terms of biological role, assembles around the rod to form the L-ring and probably protects the motor/basal body from shearing forces during rotation. This Paramagnetospirillum magneticum (strain ATCC 700264 / AMB-1) (Magnetospirillum magneticum) protein is Flagellar P-ring protein.